The sequence spans 202 residues: FMN-dependent NADH:quinone oxidoreductase (202 aa).

FMN contacts are provided by residues Ser-10 and 95 to 98; that span reads MYNF.

Belongs to the azoreductase type 1 family. In terms of assembly, homodimer. The cofactor is FMN.

It carries out the reaction 2 a quinone + NADH + H(+) = 2 a 1,4-benzosemiquinone + NAD(+). The enzyme catalyses N,N-dimethyl-1,4-phenylenediamine + anthranilate + 2 NAD(+) = 2-(4-dimethylaminophenyl)diazenylbenzoate + 2 NADH + 2 H(+). Its function is as follows. Quinone reductase that provides resistance to thiol-specific stress caused by electrophilic quinones. Functionally, also exhibits azoreductase activity. Catalyzes the reductive cleavage of the azo bond in aromatic azo compounds to the corresponding amines. The chain is FMN-dependent NADH:quinone oxidoreductase from Alkalilimnicola ehrlichii (strain ATCC BAA-1101 / DSM 17681 / MLHE-1).